The chain runs to 1026 residues: Multidrug resistance protein MdtC (1026 aa).

Residues 1 to 6 (MRFFAL) lie on the Cytoplasmic side of the membrane. The helical transmembrane segment at 7 to 29 (FIYRPVATILIAAAITLCGILGF) threads the bilayer. Topologically, residues 30-335 (RLLPVAPLPQ…TIRASLQEVE (306 aa)) are periplasmic. The chain crosses the membrane as a helical span at residues 336 to 353 (ETLAISVALVILVVFLFL). Residues 354-359 (RSGRAT) are Cytoplasmic-facing. The helical transmembrane segment at 360-379 (LIPAVAVPVSLIGTFAAMYL) threads the bilayer. Topologically, residues 380–388 (CGFSLNNLS) are periplasmic. A helical membrane pass occupies residues 389 to 411 (LMALTIATGFVVDDAIVVLENIA). The Cytoplasmic segment spans residues 412-430 (RHLEARMKPLQAALQGTRE). Residues 431 to 453 (VGFTVISMSLSLVAVFLPLLLMG) traverse the membrane as a helical segment. Over 454-467 (GLPGRLLREFAVTL) the chain is Periplasmic. Residues 468-490 (SVAIGISLVVSLTLTPMMCGWML) traverse the membrane as a helical segment. At 491–852 (KSSKPRTQPR…QVFQQTMNSQ (362 aa)) the chain is on the cytoplasmic side. The helical transmembrane segment at 853-875 (LILIVAAIATVYIVLGILYESYV) threads the bilayer. Residues 876-894 (HPLTILSTLPSAGVGALLA) lie on the Periplasmic side of the membrane. Residues 895–917 (LELFNAPFSLIALIGIMLLIGIV) traverse the membrane as a helical segment. Residues 918–947 (KKNAIMMVDFALEAQRSGGLTPEQAIFQAC) are Cytoplasmic-facing. Residues 948–970 (LLRFRPIMMTTLAALFGALPLVL) form a helical membrane-spanning segment. The Periplasmic segment spans residues 971 to 984 (SGGDGSELRQPLGI). Residues 985 to 1007 (TIVGGLVMSQLLTLYTTPVVYLF) traverse the membrane as a helical segment. Topologically, residues 1008-1026 (FDRLRLRFSRKNSKPVVEI) are cytoplasmic.

This sequence belongs to the resistance-nodulation-cell division (RND) (TC 2.A.6) family. MdtC subfamily. Part of a tripartite efflux system composed of MdtA, MdtB and MdtC. MdtC forms a heteromultimer with MdtB.

Its subcellular location is the cell inner membrane. The polypeptide is Multidrug resistance protein MdtC (Salmonella typhi).